The chain runs to 1132 residues: BTB/POZ domain-containing protein 7 (1132 aa).

Polar residues predominate over residues 1–10; sequence MGANASNYPH. The disordered stretch occupies residues 1–24; sequence MGANASNYPHSCSPRVGGNSQAQQ. Gly-2 carries the N-myristoyl glycine lipid modification. 2 BTB domains span residues 142–211 and 247–341; these read TDVD…GMED and YDVV…DLSV. Residues 413–479 enclose the BACK domain; the sequence is YGSKWVHRQA…WGEHQLMKRI (67 aa). Ser-722 is modified (phosphoserine). 2 disordered regions span residues 897–1019 and 1035–1132; these read LSQS…HLHR and QRSD…KSAL. Residues 918–927 show a composition bias toward basic residues; the sequence is RHTHTSRKKH. Composition is skewed to basic and acidic residues over residues 928-939, 1000-1019, 1083-1093, and 1105-1114; these read TLEQKTDTRENP, KKQE…HLHR, PEERSGRRLAD, and TDLEREDSIS. At Ser-1012 the chain carries Phosphoserine.

It localises to the nucleus. In terms of biological role, acts as a mediator of epithelial dynamics and organ branching by promoting cleft progression. Induced following accumulation of fibronectin in forming clefts, leading to local expression of the cell-scattering SNAIL2 and suppression of E-cadherin levels, thereby altering cell morphology and reducing cell-cell adhesion. This stimulates cell separation at the base of forming clefts by local, dynamic intercellular gap formation and promotes cleft progression. The polypeptide is BTB/POZ domain-containing protein 7 (BTBD7) (Homo sapiens (Human)).